The sequence spans 327 residues: Undecaprenyl-phosphate 4-deoxy-4-formamido-L-arabinose transferase (327 aa).

Helical transmembrane passes span 233–253 (ILSLIGSVVALSGFLLALLLI) and 268–288 (VFTLFAVLFMFIGAQFVGMGL).

Belongs to the glycosyltransferase 2 family.

Its subcellular location is the cell inner membrane. It catalyses the reaction UDP-4-deoxy-4-formamido-beta-L-arabinose + di-trans,octa-cis-undecaprenyl phosphate = 4-deoxy-4-formamido-alpha-L-arabinopyranosyl di-trans,octa-cis-undecaprenyl phosphate + UDP. It functions in the pathway glycolipid biosynthesis; 4-amino-4-deoxy-alpha-L-arabinose undecaprenyl phosphate biosynthesis; 4-amino-4-deoxy-alpha-L-arabinose undecaprenyl phosphate from UDP-4-deoxy-4-formamido-beta-L-arabinose and undecaprenyl phosphate: step 1/2. It participates in bacterial outer membrane biogenesis; lipopolysaccharide biosynthesis. Its function is as follows. Catalyzes the transfer of 4-deoxy-4-formamido-L-arabinose from UDP to undecaprenyl phosphate. The modified arabinose is attached to lipid A and is required for resistance to polymyxin and cationic antimicrobial peptides. The polypeptide is Undecaprenyl-phosphate 4-deoxy-4-formamido-L-arabinose transferase (Pectobacterium atrosepticum (strain SCRI 1043 / ATCC BAA-672) (Erwinia carotovora subsp. atroseptica)).